Reading from the N-terminus, the 553-residue chain is Ergothioneine transport permease/ergothioneine binding protein EgtU (553 aa).

In terms of domain architecture, ABC transmembrane type-1 spans 57 to 236 (LAQHFIIVAL…LFSVLADKFV (180 aa)). 6 helical membrane-spanning segments follow: residues 61–81 (FIIV…IGVF), 98–118 (FLYT…IGVG), 122–142 (ALLV…YNAL), 182–202 (IAVV…AGGL), 219–239 (VAGS…VSVF), and 261–281 (VYTN…WLIP). Over 282–553 (RNAIEEKPLV…AKDFLERLGL (272 aa)) the chain is Periplasmic. Residues 288–549 (KPLVVATKPS…PKIVAKDFLE (262 aa)) form an ergothioneine binding domain region.

In the N-terminal section; belongs to the binding-protein-dependent transport system permease family. This sequence in the C-terminal section; belongs to the OsmX family. As to quaternary structure, the complex is composed of two ATP-binding proteins (EgtV) and two transmembrane proteins (EgtU).

The protein localises to the cell inner membrane. Its function is as follows. Part of the ABC transporter complex EgtUV involved in the uptake of ergothioneine (EGT), a natural low-molecular weight (LMW) thiol antioxidant which protects H.pylori against bleach stress. Responsible for the translocation of the substrate across the membrane. Also contains a C-terminal periplasmic solute-binding domain (SBD) which binds to ergothioneine with low-micromolar affinity. Cannot bind the structurally similar compounds glycine betaine, choline, proline, carnitine or histidine. The protein is Ergothioneine transport permease/ergothioneine binding protein EgtU of Helicobacter pylori (strain G27).